A 130-amino-acid chain; its full sequence is Small ribosomal subunit protein uS8 (130 aa).

The protein belongs to the universal ribosomal protein uS8 family. Part of the 30S ribosomal subunit. Contacts proteins S5 and S12.

Its function is as follows. One of the primary rRNA binding proteins, it binds directly to 16S rRNA central domain where it helps coordinate assembly of the platform of the 30S subunit. The chain is Small ribosomal subunit protein uS8 from Pseudomonas syringae pv. tomato (strain ATCC BAA-871 / DC3000).